The chain runs to 92 residues: Small ribosomal subunit protein uS19 (92 aa).

Belongs to the universal ribosomal protein uS19 family.

Functionally, protein S19 forms a complex with S13 that binds strongly to the 16S ribosomal RNA. This chain is Small ribosomal subunit protein uS19, found in Klebsiella pneumoniae (strain 342).